Reading from the N-terminus, the 604-residue chain is Glutamine--fructose-6-phosphate aminotransferase [isomerizing] (604 aa).

Cys-2 serves as the catalytic Nucleophile; for GATase activity. A Glutamine amidotransferase type-2 domain is found at 2–218; the sequence is CGIVGVVGNR…DKELVILTKD (217 aa). SIS domains lie at 284–423 and 456–594; these read IITS…ANGK and VQAL…VDKP. Residue Lys-599 is the For Fru-6P isomerization activity of the active site.

As to quaternary structure, homodimer.

The protein localises to the cytoplasm. It catalyses the reaction D-fructose 6-phosphate + L-glutamine = D-glucosamine 6-phosphate + L-glutamate. Catalyzes the first step in hexosamine metabolism, converting fructose-6P into glucosamine-6P using glutamine as a nitrogen source. The chain is Glutamine--fructose-6-phosphate aminotransferase [isomerizing] from Streptococcus pyogenes serotype M18 (strain MGAS8232).